Reading from the N-terminus, the 213-residue chain is Isomeliandiol synthase MOI2 (213 aa).

The next 5 helical transmembrane spans lie at 18 to 38 (AALHAWNGLSLFLIVFISWFI), 52 to 72 (VLCWWALTGLIHVFQEGYYVF), 109 to 129 (IESMASVVLGPLSLLAAYALA), 137 to 157 (ILQFGVSIAQLYGACLYFLSA), and 171 to 191 (YWAYYVGQSSIWVIVPALIAI). Residues 48-190 (MDRVVLCWWA…IWVIVPALIA (143 aa)) form the EXPERA domain.

This sequence belongs to the EBP family. As to expression, mainly expressed in petioles.

It localises to the membrane. The enzyme catalyses 7,8-epoxymelianol = isomeliandiol. The protein operates within secondary metabolite biosynthesis; terpenoid biosynthesis. In terms of biological role, isomerase involved in the biosynthesis of limonoids triterpene natural products such as azadirachtin, an antifeedant widely used as bioinsecticide, and possessing many medicinal applications including anti-tumoral, anti-malarial, anti-rheumatic, antibacterial, anti-inflammatory, anti-pyretic and diuretic effects. Catalyzes the conversion of 7,8-epoxymelianol to isomeliandiol via skeletal rearrangements. The polypeptide is Isomeliandiol synthase MOI2 (Melia azedarach (Chinaberry tree)).